The chain runs to 82 residues: U-actitoxin-Oulsp2 (82 aa).

Residues 1-21 (MNTKLVVVFLLSAILFVSVTA) form the signal peptide. Residues 22–46 (SRPGKDLERDEAYETYDDERPYFKR) constitute a propeptide that is removed on maturation. In terms of domain architecture, ShKT spans 48–82 (CKDNLPAATCSNVKANNNCSSEKYKTNCAKTCGEC). 3 cysteine pairs are disulfide-bonded: Cys48–Cys82, Cys57–Cys75, and Cys66–Cys79. Residues 70-71 (KY) are theoritically crucial for binding to potassium channels.

Belongs to the sea anemone type 1 potassium channel toxin family. Type 1b subfamily.

The protein localises to the secreted. It localises to the nematocyst. Probable toxin with unknown function. In contrast to similar toxins, this toxin does not inhibit voltage-gated potassium channels (tested at 100 nM). Does not show antimicrobial activities against bacteria and yeasts. The polypeptide is U-actitoxin-Oulsp2 (Oulactis sp. (Sea anemone)).